A 706-amino-acid polypeptide reads, in one-letter code: D-(-)-3-hydroxybutyrate oligomer hydrolase (706 aa).

The first 27 residues, 1–27 (MTIIIAGKNTLTLTSLAAAVLALGACG), serve as a signal peptide directing secretion. Catalysis depends on S311, which acts as the Charge relay system.

The protein belongs to the D-(-)-3-hydroxybutyrate oligomer hydrolase family.

Its subcellular location is the secreted. The catalysed reaction is (3R)-hydroxybutanoate dimer + H2O = 2 (R)-3-hydroxybutanoate + H(+). Its pathway is lipid metabolism; butanoate metabolism. Functionally, participates in the degradation of poly-3-hydroxybutyrate (PHB). It works downstream of poly(3-hydroxybutyrate) depolymerase, hydrolyzing D(-)-3-hydroxybutyrate oligomers of various length (3HB-oligomers) into 3HB-monomers. The protein is D-(-)-3-hydroxybutyrate oligomer hydrolase of Polaromonas naphthalenivorans (strain CJ2).